Here is a 542-residue protein sequence, read N- to C-terminus: Esterase S (542 aa).

Residues 1–22 form the signal peptide; sequence MTQILLPIALLCLFAASTLSNP. C81 and C100 are oxidised to a cystine. The N-linked (GlcNAc...) asparagine glycan is linked to N110. Catalysis depends on S204, which acts as the Acyl-ester intermediate. Cysteines 256 and 268 form a disulfide. An N-linked (GlcNAc...) asparagine glycan is attached at N396. A disulfide bond links C507 and C528.

Belongs to the type-B carboxylesterase/lipase family. As to quaternary structure, monomer. Specifically expressed in the ejaculatory bulbs of male.

Its subcellular location is the secreted. It carries out the reaction a carboxylic ester + H2O = an alcohol + a carboxylate + H(+). In terms of biological role, transferred from the ejaculatory bulbs of males to the female genitals upon copulation, plays an important role in the reproductive biology. The chain is Esterase S (EstS) from Drosophila virilis (Fruit fly).